A 151-amino-acid polypeptide reads, in one-letter code: uncharacterized protein (151 aa).

BON domains follow at residues D2 to K68 and I78 to H146.

This is an uncharacterized protein from Anaplasma centrale.